We begin with the raw amino-acid sequence, 405 residues long: Phosphopentomutase (405 aa).

6 residues coordinate Mn(2+): Asp-10, Asp-303, His-308, Asp-344, His-345, and His-356.

It belongs to the phosphopentomutase family. Requires Mn(2+) as cofactor.

It localises to the cytoplasm. The enzyme catalyses 2-deoxy-alpha-D-ribose 1-phosphate = 2-deoxy-D-ribose 5-phosphate. The catalysed reaction is alpha-D-ribose 1-phosphate = D-ribose 5-phosphate. Its pathway is carbohydrate degradation; 2-deoxy-D-ribose 1-phosphate degradation; D-glyceraldehyde 3-phosphate and acetaldehyde from 2-deoxy-alpha-D-ribose 1-phosphate: step 1/2. Its function is as follows. Isomerase that catalyzes the conversion of deoxy-ribose 1-phosphate (dRib-1-P) and ribose 1-phosphate (Rib-1-P) to deoxy-ribose 5-phosphate (dRib-5-P) and ribose 5-phosphate (Rib-5-P), respectively. This chain is Phosphopentomutase, found in Shewanella loihica (strain ATCC BAA-1088 / PV-4).